The primary structure comprises 428 residues: Maltoporin (428 aa).

Positions 1–24 (MTTLRKLPIALAVAAGVLSTQAMA) are cleaved as a signal peptide.

It belongs to the porin LamB (TC 1.B.3) family. As to quaternary structure, homotrimer formed of three 18-stranded antiparallel beta-barrels, containing three independent channels.

The protein localises to the cell outer membrane. It carries out the reaction beta-maltose(in) = beta-maltose(out). Functionally, involved in the transport of maltose and maltodextrins. This is Maltoporin from Yersinia enterocolitica serotype O:8 / biotype 1B (strain NCTC 13174 / 8081).